Here is a 243-residue protein sequence, read N- to C-terminus: Ribonuclease HII (243 aa).

The RNase H type-2 domain maps to 23 to 217; the sequence is SVIVGVDEVG…LSSECEGAPP (195 aa). A divalent metal cation is bound by residues aspartate 29, glutamate 30, and aspartate 122. The disordered stretch occupies residues 223–243; sequence LSSTGIKTPVDGRGDAVATRD. Positions 232-243 are enriched in basic and acidic residues; it reads VDGRGDAVATRD.

It belongs to the RNase HII family. The cofactor is Mn(2+). Requires Mg(2+) as cofactor.

The protein resides in the cytoplasm. It catalyses the reaction Endonucleolytic cleavage to 5'-phosphomonoester.. Functionally, endonuclease that specifically degrades the RNA of RNA-DNA hybrids. The chain is Ribonuclease HII from Anaplasma marginale (strain St. Maries).